A 93-amino-acid polypeptide reads, in one-letter code: Sm-like protein LSM2 (93 aa).

The region spanning 2-76 is the Sm domain; it reads LFFSYFKDLV…VRYVQLPKDG (75 aa).

It belongs to the snRNP Sm proteins family. In terms of assembly, component of the heptameric LSM1-LSM7 complex that forms a seven-membered ring structure with a donut shape. The LSM subunits are arranged in the order LSM1, LSM2, LSM3, LSM6, LSM5, LSM7 and LSM4. LSM2 subunit interacts only with its two neighboring subunits, LSM1A or LSM1B and LSM3A or LSM3B. Component of the heptameric LSM2-LSM8 complex that forms a seven-membered ring structure with a donut shape. The LSM subunits are arranged in the order LSM8, LSM2, LSM3, LSM6, LSM5, LSM7 and LSM4. LSM2 subunit interacts only with its two neighboring subunits, LSM8 and LSM3A or LSM3B. Expressed in roots, leaves, stems, flowers and siliques.

Its subcellular location is the cytoplasm. The protein resides in the nucleus. Component of LSM protein complexes, which are involved in RNA processing. Component of the cytoplasmic LSM1-LSM7 complex which is involved in mRNA degradation by promoting decapping and leading to accurate 5'-3' mRNA decay. The cytoplasmic LSM1-LSM7 complex regulates developmental gene expression by the decapping of specific development-related transcripts. Component of the nuclear LSM2-LSM8 complex which is involved splicing nuclear mRNAs. LSM2-LSM8 binds directly to the U6 small nuclear RNAs (snRNAs) and is essential for accurate splicing of selected development-related mRNAs through the stabilization of the spliceosomal U6 snRNA. Plays a critical role in the regulation of development-related gene expression. The protein is Sm-like protein LSM2 of Arabidopsis thaliana (Mouse-ear cress).